The sequence spans 125 residues: Ribosome-binding factor A (125 aa).

The protein belongs to the RbfA family. Monomer. Binds 30S ribosomal subunits, but not 50S ribosomal subunits or 70S ribosomes.

It localises to the cytoplasm. Its function is as follows. One of several proteins that assist in the late maturation steps of the functional core of the 30S ribosomal subunit. Associates with free 30S ribosomal subunits (but not with 30S subunits that are part of 70S ribosomes or polysomes). Required for efficient processing of 16S rRNA. May interact with the 5'-terminal helix region of 16S rRNA. The sequence is that of Ribosome-binding factor A from Paracidovorax citrulli (strain AAC00-1) (Acidovorax citrulli).